A 402-amino-acid chain; its full sequence is S-adenosylmethionine synthase (402 aa).

Residue 137–142 (GQGSAD) participates in ATP binding.

This sequence belongs to the AdoMet synthase 2 family. The cofactor is Mg(2+).

The catalysed reaction is L-methionine + ATP + H2O = S-adenosyl-L-methionine + phosphate + diphosphate. The protein operates within amino-acid biosynthesis; S-adenosyl-L-methionine biosynthesis; S-adenosyl-L-methionine from L-methionine: step 1/1. Functionally, catalyzes the formation of S-adenosylmethionine from methionine and ATP. The protein is S-adenosylmethionine synthase of Pyrobaculum calidifontis (strain DSM 21063 / JCM 11548 / VA1).